The chain runs to 142 residues: Large ribosomal subunit protein uL11 (142 aa).

This sequence belongs to the universal ribosomal protein uL11 family. As to quaternary structure, part of the ribosomal stalk of the 50S ribosomal subunit. Interacts with L10 and the large rRNA to form the base of the stalk. L10 forms an elongated spine to which L12 dimers bind in a sequential fashion forming a multimeric L10(L12)X complex. One or more lysine residues are methylated.

Functionally, forms part of the ribosomal stalk which helps the ribosome interact with GTP-bound translation factors. The sequence is that of Large ribosomal subunit protein uL11 from Shewanella sediminis (strain HAW-EB3).